The chain runs to 260 residues: Transcription factor SUM-1 (260 aa).

The bHLH domain occupies 112-163 (DKRKAATLRERRRLRKVNEAFEALKRHTCANPNQRLPKVEILRNAIEYIEKL). The segment at 171–208 (KANGDSEMDSAETSSNTSDAMTDGSSPGSYSSDKAQQY) is disordered. Residues 181 to 205 (AETSSNTSDAMTDGSSPGSYSSDKA) show a composition bias toward polar residues.

Efficient DNA binding requires dimerization with another bHLH protein. Homodimer, and heterodimer with the ubiquitous bHLH protein E12.

It localises to the nucleus. Regulatory factor during embryogenesis. Conversion of pluripotent secondary mesenchyme cells to myogenic cells. It binds to the MCK enhancer element. In Lytechinus variegatus (Green sea urchin), this protein is Transcription factor SUM-1 (SUM-1).